The following is a 747-amino-acid chain: Elongation factor G, mitochondrial (747 aa).

A mitochondrion-targeting transit peptide spans 1–32; that stretch reads MTLITRVLNGNLPLRLSTLKAARQLQCGYSSH. The region spanning 42 to 319 is the tr-type G domain; sequence ERIRNIGISA…AVVDYLPNPG (278 aa). GTP contacts are provided by residues 51 to 58, 118 to 122, and 172 to 175; these read AHIDSGKT, DTPGH, and NKLD.

The protein belongs to the TRAFAC class translation factor GTPase superfamily. Classic translation factor GTPase family. EF-G/EF-2 subfamily.

The protein resides in the mitochondrion. It participates in protein biosynthesis; polypeptide chain elongation. In terms of biological role, mitochondrial GTPase that catalyzes the GTP-dependent ribosomal translocation step during translation elongation. During this step, the ribosome changes from the pre-translocational (PRE) to the post-translocational (POST) state as the newly formed A-site-bound peptidyl-tRNA and P-site-bound deacylated tRNA move to the P and E sites, respectively. Catalyzes the coordinated movement of the two tRNA molecules, the mRNA and conformational changes in the ribosome. Essential during development as it acts as a retrograde signal from mitochondria to the nucleus to slow down cell proliferation if mitochondrial energy output is low. This is Elongation factor G, mitochondrial from Drosophila mojavensis (Fruit fly).